A 194-amino-acid polypeptide reads, in one-letter code: Holliday junction branch migration complex subunit RuvA (194 aa).

Positions 1–61 (MIASLSGLLE…EDSVSLYGFA (61 aa)) are domain I. The interval 62–136 (SVLECTVFEQ…GKLTSVPLEN (75 aa)) is domain II. Residues 136 to 140 (NRKQE) form a flexible linker region. The interval 141-194 (QAVDRSAEIVQALIGLGWQRQESAAAVESVLEKDQSLTMPEILRNALRYLAKQE) is domain III.

Belongs to the RuvA family. In terms of assembly, homotetramer. Forms an RuvA(8)-RuvB(12)-Holliday junction (HJ) complex. HJ DNA is sandwiched between 2 RuvA tetramers; dsDNA enters through RuvA and exits via RuvB. An RuvB hexamer assembles on each DNA strand where it exits the tetramer. Each RuvB hexamer is contacted by two RuvA subunits (via domain III) on 2 adjacent RuvB subunits; this complex drives branch migration. In the full resolvosome a probable DNA-RuvA(4)-RuvB(12)-RuvC(2) complex forms which resolves the HJ.

It is found in the cytoplasm. The RuvA-RuvB-RuvC complex processes Holliday junction (HJ) DNA during genetic recombination and DNA repair, while the RuvA-RuvB complex plays an important role in the rescue of blocked DNA replication forks via replication fork reversal (RFR). RuvA specifically binds to HJ cruciform DNA, conferring on it an open structure. The RuvB hexamer acts as an ATP-dependent pump, pulling dsDNA into and through the RuvAB complex. HJ branch migration allows RuvC to scan DNA until it finds its consensus sequence, where it cleaves and resolves the cruciform DNA. This chain is Holliday junction branch migration complex subunit RuvA, found in Tropheryma whipplei (strain Twist) (Whipple's bacillus).